The primary structure comprises 495 residues: Putative aldehyde dehydrogenase AldA (495 aa).

Position 212-218 (212-218 (GKGSESG)) interacts with NAD(+). Residues Glu-256 and Cys-290 contribute to the active site.

This sequence belongs to the aldehyde dehydrogenase family.

The enzyme catalyses an aldehyde + NAD(+) + H2O = a carboxylate + NADH + 2 H(+). The protein is Putative aldehyde dehydrogenase AldA (aldA) of Staphylococcus aureus (strain USA300).